A 139-amino-acid polypeptide reads, in one-letter code: Exodeoxyribonuclease 7 small subunit (139 aa).

Disordered stretches follow at residues 1-26 (MAKK…LGDF) and 82-139 (DAEG…EDDE). The segment covering 130 to 139 (ADLDSAEDDE) has biased composition (acidic residues).

This sequence belongs to the XseB family. In terms of assembly, heterooligomer composed of large and small subunits.

The protein resides in the cytoplasm. It carries out the reaction Exonucleolytic cleavage in either 5'- to 3'- or 3'- to 5'-direction to yield nucleoside 5'-phosphates.. Functionally, bidirectionally degrades single-stranded DNA into large acid-insoluble oligonucleotides, which are then degraded further into small acid-soluble oligonucleotides. This chain is Exodeoxyribonuclease 7 small subunit, found in Rhodopirellula baltica (strain DSM 10527 / NCIMB 13988 / SH1).